The chain runs to 399 residues: All trans-polyprenyl-diphosphate synthase PDSS2 (399 aa).

Belongs to the FPP/GGPP synthase family. As to quaternary structure, heterotetramer composed of 2 PDSS1/DPS1 and 2 PDSS2/DLP1 subunits.

The protein resides in the mitochondrion. The catalysed reaction is 7 isopentenyl diphosphate + (2E,6E)-farnesyl diphosphate = all-trans-decaprenyl diphosphate + 7 diphosphate. It catalyses the reaction 6 isopentenyl diphosphate + (2E,6E)-farnesyl diphosphate = all-trans-nonaprenyl diphosphate + 6 diphosphate. It participates in cofactor biosynthesis; ubiquinone biosynthesis. In terms of biological role, heterotetrameric enzyme that catalyzes the condensation of farnesyl diphosphate (FPP), which acts as a primer, and isopentenyl diphosphate (IPP) to produce prenyl diphosphates of varying chain lengths and participates in the determination of the side chain of ubiquinone. Supplies nona and decaprenyl diphosphate, the precursors for the side chain of the isoprenoid quinones ubiquinone-9 (Q9) and ubiquinone-10 (Q10) respectively. The enzyme adds isopentenyl diphosphate molecules sequentially to farnesyl diphosphate with trans stereochemistry. May play a role during cerebellar development. May regulate mitochondrial respiratory chain function. This is All trans-polyprenyl-diphosphate synthase PDSS2 from Homo sapiens (Human).